The following is a 118-amino-acid chain: Small ribosomal subunit protein uS11 (118 aa).

The protein belongs to the universal ribosomal protein uS11 family. In terms of assembly, part of the 30S ribosomal subunit. Interacts with proteins S7 and S18. Binds to IF-3.

Located on the platform of the 30S subunit, it bridges several disparate RNA helices of the 16S rRNA. Forms part of the Shine-Dalgarno cleft in the 70S ribosome. The chain is Small ribosomal subunit protein uS11 from Carsonella ruddii (strain PV).